Reading from the N-terminus, the 708-residue chain is Ion-translocating oxidoreductase complex subunit C (708 aa).

2 4Fe-4S ferredoxin-type domains span residues 369-397 (GEPQ…QQLY) and 407-436 (KATT…VQYF). [4Fe-4S] cluster contacts are provided by C377, C380, C383, C387, C416, C419, C422, and C426. Residues 630-682 (AKARKLEQQQANAEPEEQIDPRKAAVEAAIARAKARKLEQQQANAEPEEQIDP) are disordered.

This sequence belongs to the 4Fe4S bacterial-type ferredoxin family. RnfC subfamily. The complex is composed of six subunits: RsxA, RsxB, RsxC, RsxD, RsxE and RsxG. It depends on [4Fe-4S] cluster as a cofactor.

The protein localises to the cell inner membrane. In terms of biological role, part of a membrane-bound complex that couples electron transfer with translocation of ions across the membrane. Required to maintain the reduced state of SoxR. The protein is Ion-translocating oxidoreductase complex subunit C of Escherichia coli O1:K1 / APEC.